Here is a 202-residue protein sequence, read N- to C-terminus: uncharacterized protein (202 aa).

The N-terminal stretch at 1–18 (MKNRLLILSLLVSVPAFA) is a signal peptide.

This sequence to E.coli YebB.

This is an uncharacterized protein from Escherichia coli (strain K12).